The primary structure comprises 80 residues: Cytochrome c oxidase subunit 7A1, mitochondrial (80 aa).

The transit peptide at 1 to 21 (MLAPRVSQALIRSFSSTARNR) directs the protein to the mitochondrion. The Mitochondrial matrix segment spans residues 22-46 (LKNRVPEKQKLFQEDNGIPVYLKGG). Residues 47–75 (VVDHILYRVTMGLCLGGTAYGVYCLAWAS) traverse the membrane as a helical segment. The Mitochondrial intermembrane segment spans residues 76–80 (FPRNK).

The protein belongs to the cytochrome c oxidase VIIa family. In terms of assembly, component of the complex IV (CIV, cytochrome c oxidase), a multisubunit enzyme composed of 14 subunits. The complex is composed of a catalytic core of 3 subunits MT-CO1, MT-CO2 and MT-CO3, encoded in the mitochondrial DNA, and 11 supernumerary subunits COX4I1 (or COX4I2), COX5A, COX5B, COX6A2 (or COX6A1), COX6B1 (or COX6B2), COX6C, COX7A1 (or COX7A2), COX7B, COX7C, COX8B and NDUFA4, which are encoded in the nuclear genome. The complex exists as a monomer or a dimer and forms supercomplexes (SCs) in the inner mitochondrial membrane with NADH-ubiquinone oxidoreductase (complex I, CI) and ubiquinol-cytochrome c oxidoreductase (cytochrome b-c1 complex, complex III, CIII), resulting in different assemblies (supercomplex SCI(1)III(2)IV(1) and megacomplex MCI(2)III(2)IV(2)).

The protein localises to the mitochondrion inner membrane. It participates in energy metabolism; oxidative phosphorylation. Its function is as follows. Component of the mitochondrial respiratory complex IV (CIV, also named cytochrome c oxidase complex), the last enzyme in the mitochondrial electron transport chain which drives oxidative phosphorylation. The CIV complex is the component of the respiratory chain that catalyzes the reduction of oxygen to water. Acts as an assembly factor that specifically drives the homodimerization of CIV complexes, mediating the formation of mitochondrial respiratory supercomplexes (respirasomes) containing two CIV: supercomplxes with two molecules of CIV show improved activity. Despite being highly expressed in brown adipose tissue, not required for thermogenesis. This Saimiri sciureus (Common squirrel monkey) protein is Cytochrome c oxidase subunit 7A1, mitochondrial (COX7A1).